The following is a 78-amino-acid chain: Translation initiation factor IF-1 (78 aa).

One can recognise an S1-like domain in the interval 1–72 (MAKEAEMEFE…TRGRITYRKI (72 aa)).

Belongs to the IF-1 family. In terms of assembly, component of the 30S ribosomal translation pre-initiation complex which assembles on the 30S ribosome in the order IF-2 and IF-3, IF-1 and N-formylmethionyl-tRNA(fMet); mRNA recruitment can occur at any time during PIC assembly.

The protein localises to the cytoplasm. One of the essential components for the initiation of protein synthesis. Stabilizes the binding of IF-2 and IF-3 on the 30S subunit to which N-formylmethionyl-tRNA(fMet) subsequently binds. Helps modulate mRNA selection, yielding the 30S pre-initiation complex (PIC). Upon addition of the 50S ribosomal subunit IF-1, IF-2 and IF-3 are released leaving the mature 70S translation initiation complex. The protein is Translation initiation factor IF-1 of Mesoplasma florum (strain ATCC 33453 / NBRC 100688 / NCTC 11704 / L1) (Acholeplasma florum).